We begin with the raw amino-acid sequence, 465 residues long: MVKLVEVLQHPDEIVPILQMLHKTYRAKRSYKDPGLAFCYGMLQRVSRSFSVVIQQLPDELRHPICVFYLILRALDTVEDDMNLPNEVKIPLLRTFHEHLFDRSWKLKCGYGPYVDLMENYPLVTDVFLTLSPGAQEVIRDSTRRMGNGMADFIGKDEVHSVAEYDLYCHYVAGLVGSAVAKIFVDSGLEKENLVAEVDLANNMGQFLQKTNVIRDYLEDINEEPAPRMFWPREIWGKYAQELADFKDPANEKAAVQCLNHMVTDALRHCEIGLNVIPLLQNIGILRSCLIPEVMGLRTLTLCYNNPQVFRGVVKMRRGETAKLFMSIYDKRSFYQTYLRLANELEAKCKGEASGDPMVATTLKHVHGIQKSCKAALSSKELLAKSGSALTDDPAIRLLLLVGVVAYFAYAFNLGDVRGEHGVRALGSILDLSQKGLAVASVALLLLVLLARSRLPLLTSASSKQ.

Residues Arg48 and Arg73 each coordinate NADP(+). Positions 76, 79, and 80 each coordinate Mg(2+). Arg215, Lys315, and Arg317 together coordinate NADP(+). The next 2 membrane-spanning stretches (helical) occupy residues 395-415 and 429-449; these read AIRL…FNLG and ILDL…LLVL.

The protein belongs to the phytoene/squalene synthase family.

The protein resides in the membrane. It catalyses the reaction presqualene diphosphate + NADPH + H(+) = squalene + diphosphate + NADP(+). Produces squalene when coexpressed with SSL-1 and bisfarnesyl ether and a very small amount of squalene when incubated alone in the presence of NADPH. In Botryococcus braunii (Green alga), this protein is Botryococcus squalene synthase (SSL-2).